A 126-amino-acid chain; its full sequence is MAEKTKAFELRTKNKTQLLEHLKELRTELSSLRVAQVKSPNPSKLAKIGTVRKAIARVLTVFNQTQKNHLRAVYSKKSSSKIPTDLRYKKTRAIRRRLTNKQSKVVTLRVSKTATNFPQRVFAVKA.

It belongs to the universal ribosomal protein uL29 family.

The chain is Large ribosomal subunit protein uL29 (rpl35) from Dictyostelium discoideum (Social amoeba).